The sequence spans 71 residues: Virion membrane protein A13 homolog (71 aa).

Residues 1–21 (MGIIDTFVITAVTVIIFCLLI) form a helical membrane-spanning segment. Over 22–70 (YAAYKRYKCIPSPDDRDKVLKSTLNDDTLFNQTLTPDQVKALHRLVTSS) the chain is Virion surface.

Belongs to the chordopoxvirinae A13 family.

It localises to the virion membrane. In terms of biological role, essential for the encapsidation of DNA into immature virions (IV) and the subsequent maturation of IV into mature virions (MV). This is Virion membrane protein A13 homolog from Vertebrata (FPV).